The sequence spans 249 residues: Triosephosphate isomerase (249 aa).

The substrate site is built by N12 and K14. K14 carries the post-translational modification N6-acetyllysine. A Phosphoserine modification is found at S21. Y68 is subject to 3'-nitrotyrosine. S80 carries the phosphoserine modification. Catalysis depends on H96, which acts as the Electrophile. Phosphoserine is present on S106. A Glycyl lysine isopeptide (Lys-Gly) (interchain with G-Cter in SUMO1) cross-link involves residue K142. The residue at position 149 (K149) is an N6-succinyllysine. The residue at position 156 (K156) is an N6-acetyllysine; alternate. K156 bears the N6-succinyllysine; alternate mark. S159 is modified (phosphoserine). The active-site Proton acceptor is E166. T173 is subject to Phosphothreonine. Residue K194 is modified to N6-acetyllysine; alternate. K194 bears the N6-succinyllysine; alternate mark. K194 bears the N6-methyllysine; alternate mark. At S198 the chain carries Phosphoserine. A 3'-nitrotyrosine modification is found at Y209. Residue S212 is modified to Phosphoserine. Position 214 is a phosphothreonine (T214). Phosphoserine is present on S223. Position 238 is an N6-acetyllysine (K238).

This sequence belongs to the triosephosphate isomerase family. In terms of assembly, homodimer.

It localises to the cytoplasm. It carries out the reaction D-glyceraldehyde 3-phosphate = dihydroxyacetone phosphate. It catalyses the reaction dihydroxyacetone phosphate = methylglyoxal + phosphate. The protein operates within carbohydrate degradation; glycolysis; D-glyceraldehyde 3-phosphate from glycerone phosphate: step 1/1. It participates in carbohydrate biosynthesis; gluconeogenesis. Functionally, triosephosphate isomerase is an extremely efficient metabolic enzyme that catalyzes the interconversion between dihydroxyacetone phosphate (DHAP) and D-glyceraldehyde-3-phosphate (G3P) in glycolysis and gluconeogenesis. Its function is as follows. It is also responsible for the non-negligible production of methylglyoxal a reactive cytotoxic side-product that modifies and can alter proteins, DNA and lipids. This Homo sapiens (Human) protein is Triosephosphate isomerase (TPI1).